A 599-amino-acid polypeptide reads, in one-letter code: MAEAGDENLYAAARDIARALGKDPSAAGDILQILSGYGASGNRGGDPRPTPSRGGSNVNFDRALTSLERQISSYIVEDRPIWSDPVDSRTFLDSVDELLAIAGDLRSMAGDKSVAVCQSRADELIQQVMFRLQEEFGFVMDRAPDSFDSDDEFPGEEDNDTSDGVIVARPITDYKIVIEALQSSVIGDLNAIAVRMVAGGFAKECSRVYSSRRREFLEESLSRLHLRGLSMEEVQESPWQDLEDEIDRWIKAVTLIFHVFFPSERLLCDRVFSDLPVSSVTDLSFMEVCRGTTTQLLNFADAIALGSRLPERLFKVVDLYEAMQDLIPKMETLFSDRYCSPLRHEALAIHKRLGEAIRGIFMELENLIRRDPPKTAFPGGGIHPITRYVMNYLRAACKSRQSLEQILDQTGNETGSDTRPLSVQIIWVLELLESNLEGKKRTYRDPSLCFLFMMNNDKYILDKAKDNELGLVLGEDWIVKHAAKLRQYHSNYRRSSWNQVVGLLRTDGPYPKLVENLRLFKSQFDEVCKVQSQWVVSDGQLREELRSSVAGIVSPAYSNFIRRLKESPEINGRRGEPFIPYTVEDVEFIIKRLFKESSS.

Residues 38–58 (GASGNRGGDPRPTPSRGGSNV) form a disordered region.

The protein belongs to the EXO70 family. As to quaternary structure, self interacts. Interacts with EXO70B1. Interacts with the exocyst subunits EXO70H1, SEC5A and SEC15B. Binds to SNAP33. Subunit of the exocyst complex that mediates vesicle tethering during exocytosis. Binds to PUB22. Post-translationally, target of the E3 ubiquitin-protein ligase PUB22 that mediates its ubiquitination and degradation via the 26S proteasome to attenuate pathogen-associated molecular patterns (PAMP)-induced signaling, especially is response to the bacterial elicitor flg22. Mostly expressed in leaves and, to a lower extent, in roots, cotyledons, internodes, flower buds, siliques and anthers.

Its subcellular location is the cytoplasmic vesicle. The protein localises to the phagosome. It is found in the cytoplasm. The protein resides in the nucleus. Its function is as follows. Component of an exocyst subcomplex specifically involved in autophagy-related, Golgi-independent membrane traffic to the vacuole. Regulates autophagosome formation and autophagy-related Golgi-independent import into the vacuole. Positive regulator of defense responses to pathogenic bacteria (e.g. P.syringae pv. maculicola), to the biotrophic oomycete H.arabidopsidis and to fungi (e.g. B.graminis hordei), especially in cell wall apposition formation related to plant defense. Required for both immediate and later responses triggered by pathogen-associated molecular patterns (PAMPs). Positive regulator of abscisic acid (ABA)-independent mannitol (drought)-promoted stomatal closure. This chain is Exocyst complex component EXO70B2, found in Arabidopsis thaliana (Mouse-ear cress).